Here is a 381-residue protein sequence, read N- to C-terminus: Lipid-A-disaccharide synthase (381 aa).

It belongs to the LpxB family.

The catalysed reaction is a lipid X + a UDP-2-N,3-O-bis[(3R)-3-hydroxyacyl]-alpha-D-glucosamine = a lipid A disaccharide + UDP + H(+). It functions in the pathway bacterial outer membrane biogenesis; LPS lipid A biosynthesis. Its function is as follows. Condensation of UDP-2,3-diacylglucosamine and 2,3-diacylglucosamine-1-phosphate to form lipid A disaccharide, a precursor of lipid A, a phosphorylated glycolipid that anchors the lipopolysaccharide to the outer membrane of the cell. This Rickettsia bellii (strain OSU 85-389) protein is Lipid-A-disaccharide synthase.